Reading from the N-terminus, the 382-residue chain is Lipid-A-disaccharide synthase (382 aa).

The protein belongs to the LpxB family.

The catalysed reaction is 2-N,3-O-bis[(3R)-3-hydroxytetradecanoyl]-alpha-D-glucosaminyl 1-phosphate + UDP-2-N,3-O-bis[(3R)-3-hydroxytetradecanoyl]-alpha-D-glucosamine = lipid A disaccharide (E. coli) + UDP + H(+). It catalyses the reaction a lipid X + a UDP-2-N,3-O-bis[(3R)-3-hydroxyacyl]-alpha-D-glucosamine = a lipid A disaccharide + UDP + H(+). The protein operates within glycolipid biosynthesis; lipid IV(A) biosynthesis; lipid IV(A) from (3R)-3-hydroxytetradecanoyl-[acyl-carrier-protein] and UDP-N-acetyl-alpha-D-glucosamine: step 5/6. Its function is as follows. Condensation of UDP-2,3-diacylglucosamine and 2,3-diacylglucosamine-1-phosphate to form lipid A disaccharide, a precursor of lipid A, a phosphorylated glycolipid that anchors the lipopolysaccharide to the outer membrane of the cell. This Salmonella agona (strain SL483) protein is Lipid-A-disaccharide synthase.